A 235-amino-acid polypeptide reads, in one-letter code: tRNA (guanine-N(1)-)-methyltransferase (235 aa).

S-adenosyl-L-methionine contacts are provided by residues glycine 112 and 131 to 136 (LGDFVL).

The protein belongs to the RNA methyltransferase TrmD family. As to quaternary structure, homodimer.

It localises to the cytoplasm. It catalyses the reaction guanosine(37) in tRNA + S-adenosyl-L-methionine = N(1)-methylguanosine(37) in tRNA + S-adenosyl-L-homocysteine + H(+). Specifically methylates guanosine-37 in various tRNAs. This Synechococcus elongatus (strain ATCC 33912 / PCC 7942 / FACHB-805) (Anacystis nidulans R2) protein is tRNA (guanine-N(1)-)-methyltransferase.